The primary structure comprises 432 residues: Cysteine desulfurase, mitosomal (432 aa).

Pyridoxal 5'-phosphate-binding positions include 102-103, Gln212, and 232-234; these read AT and CAH. Lys235 carries the post-translational modification N6-(pyridoxal phosphate)lysine. Thr272 contacts pyridoxal 5'-phosphate. Cys357 acts as the Cysteine persulfide intermediate in catalysis. Cys357 lines the [2Fe-2S] cluster pocket.

It belongs to the class-V pyridoxal-phosphate-dependent aminotransferase family. NifS/IscS subfamily. Pyridoxal 5'-phosphate is required as a cofactor.

It localises to the mitosome. It carries out the reaction (sulfur carrier)-H + L-cysteine = (sulfur carrier)-SH + L-alanine. Its function is as follows. Catalyzes the removal of elemental sulfur from cysteine to produce alanine. It supplies the inorganic sulfur for iron-sulfur (Fe-S) clusters in mitosomes. The chain is Cysteine desulfurase, mitosomal from Encephalitozoon cuniculi (strain GB-M1) (Microsporidian parasite).